A 258-amino-acid polypeptide reads, in one-letter code: Ribosomal RNA small subunit methyltransferase J (258 aa).

Residues 123–124 and aspartate 177 each bind S-adenosyl-L-methionine; that span reads ER. The segment at 232–258 is disordered; sequence IDGPKPSHSLEGKSSRYDIYPKKALKA. Residues 239 to 252 are compositionally biased toward basic and acidic residues; sequence HSLEGKSSRYDIYP.

Belongs to the methyltransferase superfamily. RsmJ family.

It is found in the cytoplasm. It carries out the reaction guanosine(1516) in 16S rRNA + S-adenosyl-L-methionine = N(2)-methylguanosine(1516) in 16S rRNA + S-adenosyl-L-homocysteine + H(+). In terms of biological role, specifically methylates the guanosine in position 1516 of 16S rRNA. In Pseudomonas putida (strain GB-1), this protein is Ribosomal RNA small subunit methyltransferase J.